The sequence spans 369 residues: Spore membrane assembly protein 2 (369 aa).

The Cytoplasmic portion of the chain corresponds to 1–6 (MLFPKR). The chain crosses the membrane as a helical span at residues 7-27 (LIVWGVLLILSLSQFVLYLPA). Over 28–220 (TTCTNSKGLR…NLAFILMMFN (193 aa)) the chain is Lumenal. Residues 221-241 (GMVFYFAVLEIIVGFLSICVV) traverse the membrane as a helical segment. Residues 242–265 (SAFGGALSVGKRHRLFPMLLKSSS) are Cytoplasmic-facing. A helical transmembrane segment spans residues 266-286 (SILVVIATLTILCNIVYLIAL). At 287–319 (KTLEPEEVTDVGSDNAAVHTTGWELLKVNVGSG) the chain is on the lumenal side. The chain crosses the membrane as a helical span at residues 320-340 (FIMGLARYAIQWVLLVLAFLA). The Cytoplasmic segment spans residues 341-369 (ANHYKAKPKKSDKYTEDTSNSPSPDLMEK). The tract at residues 348–369 (PKKSDKYTEDTSNSPSPDLMEK) is disordered.

It belongs to the SMA2 family.

It localises to the prospore membrane. Its subcellular location is the endoplasmic reticulum. Its function is as follows. Involved in spore and ascus formation. Required for the efficient assembly of the precursors of the prospore membrane to a continuous prospore membrane. In Saccharomyces cerevisiae (strain ATCC 204508 / S288c) (Baker's yeast), this protein is Spore membrane assembly protein 2 (SMA2).